Consider the following 301-residue polypeptide: MNQIEKTGELTSSRFTVRDFTELVKIGIVNSNTITAFTGMWLAFQLNGISFIQNVDVIFFTIVGSALIVAASGAFNNVIDRDIDGIMERTKNRPTMTGKISGKRALMVALVLGVVGTIMLFMTTWQAGVLGVIGVFLYVVVYSLYAKRKLVSNTVIGSFSGAVPPLIGWFAVEPSFSIVPIMLFLVMFCWQPPHFYAIAIKRKEEYAAAGIPMLPVVKGIERTKKSMFFWVILLTVLPFFMFDLGLVYVILATLLNIGWLALSIYGFKMDDSIKWAKWMFVYSLNYMTILFVAMVVISIFL.

Helical transmembrane passes span 20-42 (FTEL…GMWL), 55-75 (VDVI…SGAF), 105-125 (ALMV…MTTW), 126-146 (QAGV…SLYA), 150-172 (LVSN…WFAV), 176-198 (FSIV…FYAI), 227-247 (MFFW…LGLV), 249-269 (VILA…GFKM), and 280-300 (FVYS…ISIF).

This sequence belongs to the UbiA prenyltransferase family. Protoheme IX farnesyltransferase subfamily. Interacts with CtaA.

It localises to the cell membrane. It catalyses the reaction heme b + (2E,6E)-farnesyl diphosphate + H2O = Fe(II)-heme o + diphosphate. It functions in the pathway porphyrin-containing compound metabolism; heme O biosynthesis; heme O from protoheme: step 1/1. Its function is as follows. Converts heme B (protoheme IX) to heme O by substitution of the vinyl group on carbon 2 of heme B porphyrin ring with a hydroxyethyl farnesyl side group. This chain is Protoheme IX farnesyltransferase, found in Listeria innocua serovar 6a (strain ATCC BAA-680 / CLIP 11262).